Reading from the N-terminus, the 170-residue chain is Peptide deformylase (170 aa).

Fe cation is bound by residues Cys91 and His133. Glu134 is an active-site residue. His137 is a Fe cation binding site.

It belongs to the polypeptide deformylase family. Fe(2+) is required as a cofactor.

It catalyses the reaction N-terminal N-formyl-L-methionyl-[peptide] + H2O = N-terminal L-methionyl-[peptide] + formate. Functionally, removes the formyl group from the N-terminal Met of newly synthesized proteins. Requires at least a dipeptide for an efficient rate of reaction. N-terminal L-methionine is a prerequisite for activity but the enzyme has broad specificity at other positions. This Actinobacillus pleuropneumoniae serotype 7 (strain AP76) protein is Peptide deformylase.